Reading from the N-terminus, the 206-residue chain is Sclerostin domain-containing protein 1 (206 aa).

Residues 1–23 (MLPPAIHLSLIPLLCILMRNCLA) form the signal peptide. The tract at residues 42–62 (AHPSSNSTLNQARNGGRHFSS) is disordered. Residues 44–62 (PSSNSTLNQARNGGRHFSS) show a composition bias toward polar residues. A glycan (N-linked (GlcNAc...) asparagine) is linked at Asn-47. 4 disulfide bridges follow: Cys-75–Cys-133, Cys-89–Cys-147, Cys-100–Cys-163, and Cys-104–Cys-165. Residues 75-170 (CRELRSTKYI…TACKCKRYTR (96 aa)) enclose the CTCK domain. Asn-173 is a glycosylation site (N-linked (GlcNAc...) asparagine). Positions 176 to 206 (SHNFESVSPAKPAQHHRERKRASKSSKHSLS) are disordered. The span at 188–206 (AQHHRERKRASKSSKHSLS) shows a compositional bias: basic residues.

This sequence belongs to the sclerostin family. As to quaternary structure, interacts with BMP2, BMP4, BMP6 and BMP7 with high affinity. Highly expressed in kidney at renal collecting ducts level and weakly in brain.

It localises to the secreted. May be involved in the onset of endometrial receptivity for implantation/sensitization for the decidual cell reaction. Enhances Wnt signaling and inhibits TGF-beta signaling. Directly antagonizes activity of BMP2, BMP4, BMP6 and BMP7 in a dose-dependent manner. The protein is Sclerostin domain-containing protein 1 (Sostdc1) of Mus musculus (Mouse).